Consider the following 140-residue polypeptide: Chorion class A protein Ld2/Ld41 (140 aa).

Positions 1-21 (MNSFALLLVCIQACLVQSVFS) are cleaved as a signal peptide.

It belongs to the chorion protein family.

Its function is as follows. This protein is one of many from the eggshell of the gypsy moth. This chain is Chorion class A protein Ld2/Ld41, found in Lymantria dispar (Gypsy moth).